The primary structure comprises 955 residues: Structure-specific endonuclease subunit SLX4 (955 aa).

Disordered stretches follow at residues 75–173 (QAEQ…RTTS), 189–231 (PVTT…TVSR), 352–376 (GPSN…KKPR), 539–608 (EMQK…PTKI), 621–648 (PIVA…PPPR), 705–784 (AAGQ…ASPD), and 819–846 (LDSD…EKDS). The segment covering 123–137 (RKARKTANGVTKKKR) has biased composition (basic residues). Positions 150 to 159 (NEITTPTKNQ) are enriched in polar residues. The segment covering 189 to 198 (PVTTSTTDLT) has biased composition (low complexity). The segment covering 209-225 (TKSRVRKTSSAASRKKK) has biased composition (basic residues). Over residues 352-362 (GPSNDSKIPNQ) the composition is skewed to polar residues. Residues 539 to 551 (EMQKSPSRSEPKG) show a composition bias toward basic and acidic residues. A compositionally biased stretch (polar residues) spans 579–601 (SANSAEHTLKTQASKSTHFASTT). Low complexity-rich tracts occupy residues 705–720 (AAGQ…RTSA) and 727–737 (KTSTAAAAAKS). Basic residues-rich tracts occupy residues 738 to 748 (PTKRPVGRPRK) and 767 to 776 (KRPRGRPKKN). Residues 828-841 (SPSPSLSPEPVFSS) show a composition bias toward low complexity.

The protein belongs to the SLX4 family. Forms a heterodimer with SLX1. Post-translationally, phosphorylated in response to DNA damage.

The protein resides in the nucleus. Regulatory subunit of the SLX1-SLX4 structure-specific endonuclease that resolves DNA secondary structures generated during DNA repair and recombination. Has endonuclease activity towards branched DNA substrates, introducing single-strand cuts in duplex DNA close to junctions with ss-DNA. The protein is Structure-specific endonuclease subunit SLX4 of Pyricularia oryzae (strain 70-15 / ATCC MYA-4617 / FGSC 8958) (Rice blast fungus).